We begin with the raw amino-acid sequence, 285 residues long: Formate channel FocA (285 aa).

Residues 1–30 (MKADNPFDLLLPAAMAKVAEEAGVYKATKH) are Cytoplasmic-facing. A helical membrane pass occupies residues 31–56 (PLKTFYLAITAGVFISIAFVFYITAT). The Periplasmic segment spans residues 57–64 (TGTGTMPF). Residues 65–85 (GMAKLVGGICFSLGLILCVVC) form a helical membrane-spanning segment. Topologically, residues 86–112 (GADLFTSTVLIVVAKASGRITWGQLAK) are cytoplasmic. A helical membrane pass occupies residues 113 to 135 (NWLNVYFGNLVGALLFVLLMWLS). Over 136 to 160 (GEYMTANGQWGLNVLQTADHKVHHT) the chain is Periplasmic. A helical membrane pass occupies residues 161 to 181 (FIEAVCLGILANLMVCLAVWM). The Cytoplasmic segment spans residues 182–187 (SYSGRS). The helical transmembrane segment at 188–205 (LMDKAFIMVLPVAMFVAS) threads the bilayer. The Periplasmic portion of the chain corresponds to 206–249 (GFEHSIANMFMIPMGIVIRDFASPEFWTAVGSAPENFSHLTVMN). The helical transmembrane segment at 250 to 276 (FITDNLIPVTIGNIIGGGLLVGLTYWV) threads the bilayer. The Cytoplasmic portion of the chain corresponds to 277-285 (IYLRENDHH).

This sequence belongs to the FNT transporter (TC 1.A.16) family. As to quaternary structure, homopentamer.

The protein resides in the cell inner membrane. The enzyme catalyses formate(in) = formate(out). Its function is as follows. Involved in the bidirectional transport of formate during mixed-acid fermentation. Functions to maintain relatively constant intracellular formate levels during growth, using different mechanisms for efflux and uptake of the anion. Is impermeable to water. The polypeptide is Formate channel FocA (Escherichia coli O157:H7).